Here is a 432-residue protein sequence, read N- to C-terminus: RING finger protein 44 (432 aa).

A disordered region spans residues 1–86 (MRPWALAVTR…GGSPRMLHPA (86 aa)). Residues 56–65 (QQPPSRPPHL) show a composition bias toward pro residues. An RING-type; atypical zinc finger spans residues 380 to 421 (CVVCFSDFEARQLLRVLPCNHEFHTKCVDKWLKANRTCPICR).

The protein is RING finger protein 44 (RNF44) of Homo sapiens (Human).